A 348-amino-acid chain; its full sequence is Phosphoribosylformylglycinamidine cyclo-ligase (348 aa).

The protein belongs to the AIR synthase family.

It localises to the cytoplasm. The catalysed reaction is 2-formamido-N(1)-(5-O-phospho-beta-D-ribosyl)acetamidine + ATP = 5-amino-1-(5-phospho-beta-D-ribosyl)imidazole + ADP + phosphate + H(+). It functions in the pathway purine metabolism; IMP biosynthesis via de novo pathway; 5-amino-1-(5-phospho-D-ribosyl)imidazole from N(2)-formyl-N(1)-(5-phospho-D-ribosyl)glycinamide: step 2/2. This chain is Phosphoribosylformylglycinamidine cyclo-ligase, found in Geotalea uraniireducens (strain Rf4) (Geobacter uraniireducens).